The primary structure comprises 123 residues: Ribosome-binding factor A (123 aa).

It belongs to the RbfA family. As to quaternary structure, monomer. Binds 30S ribosomal subunits, but not 50S ribosomal subunits or 70S ribosomes.

It is found in the cytoplasm. One of several proteins that assist in the late maturation steps of the functional core of the 30S ribosomal subunit. Associates with free 30S ribosomal subunits (but not with 30S subunits that are part of 70S ribosomes or polysomes). Required for efficient processing of 16S rRNA. May interact with the 5'-terminal helix region of 16S rRNA. The chain is Ribosome-binding factor A from Rickettsia bellii (strain OSU 85-389).